The primary structure comprises 427 residues: UDP-N-acetylglucosamine--N-acetylmuramyl-(pentapeptide) pyrophosphoryl-undecaprenol N-acetylglucosamine transferase (427 aa).

Residues Thr-29–Gly-31, Asn-141, Arg-177, Ser-205, Ile-258, and Gln-303 each bind UDP-N-acetyl-alpha-D-glucosamine. Positions Ser-408–Gln-427 are disordered.

This sequence belongs to the glycosyltransferase 28 family. MurG subfamily.

It localises to the cell inner membrane. The catalysed reaction is di-trans,octa-cis-undecaprenyl diphospho-N-acetyl-alpha-D-muramoyl-L-alanyl-D-glutamyl-meso-2,6-diaminopimeloyl-D-alanyl-D-alanine + UDP-N-acetyl-alpha-D-glucosamine = di-trans,octa-cis-undecaprenyl diphospho-[N-acetyl-alpha-D-glucosaminyl-(1-&gt;4)]-N-acetyl-alpha-D-muramoyl-L-alanyl-D-glutamyl-meso-2,6-diaminopimeloyl-D-alanyl-D-alanine + UDP + H(+). It functions in the pathway cell wall biogenesis; peptidoglycan biosynthesis. Functionally, cell wall formation. Catalyzes the transfer of a GlcNAc subunit on undecaprenyl-pyrophosphoryl-MurNAc-pentapeptide (lipid intermediate I) to form undecaprenyl-pyrophosphoryl-MurNAc-(pentapeptide)GlcNAc (lipid intermediate II). In Xanthomonas campestris pv. campestris (strain 8004), this protein is UDP-N-acetylglucosamine--N-acetylmuramyl-(pentapeptide) pyrophosphoryl-undecaprenol N-acetylglucosamine transferase.